The sequence spans 186 residues: Elongation factor P (186 aa).

The protein belongs to the elongation factor P family.

It is found in the cytoplasm. The protein operates within protein biosynthesis; polypeptide chain elongation. In terms of biological role, involved in peptide bond synthesis. Stimulates efficient translation and peptide-bond synthesis on native or reconstituted 70S ribosomes in vitro. Probably functions indirectly by altering the affinity of the ribosome for aminoacyl-tRNA, thus increasing their reactivity as acceptors for peptidyl transferase. The sequence is that of Elongation factor P from Shewanella halifaxensis (strain HAW-EB4).